The primary structure comprises 427 residues: Glutamate-1-semialdehyde 2,1-aminomutase (427 aa).

An N6-(pyridoxal phosphate)lysine modification is found at K265.

It belongs to the class-III pyridoxal-phosphate-dependent aminotransferase family. HemL subfamily. In terms of assembly, homodimer. Requires pyridoxal 5'-phosphate as cofactor.

The protein resides in the cytoplasm. It catalyses the reaction (S)-4-amino-5-oxopentanoate = 5-aminolevulinate. It functions in the pathway porphyrin-containing compound metabolism; protoporphyrin-IX biosynthesis; 5-aminolevulinate from L-glutamyl-tRNA(Glu): step 2/2. The protein is Glutamate-1-semialdehyde 2,1-aminomutase of Bordetella bronchiseptica (strain ATCC BAA-588 / NCTC 13252 / RB50) (Alcaligenes bronchisepticus).